Reading from the N-terminus, the 864-residue chain is DNA mismatch repair protein MutS (864 aa).

623-630 (GPNMGGKS) lines the ATP pocket.

Belongs to the DNA mismatch repair MutS family.

Its function is as follows. This protein is involved in the repair of mismatches in DNA. It is possible that it carries out the mismatch recognition step. This protein has a weak ATPase activity. In Polaromonas sp. (strain JS666 / ATCC BAA-500), this protein is DNA mismatch repair protein MutS.